The sequence spans 197 residues: Imidazoleglycerol-phosphate dehydratase (197 aa).

The protein belongs to the imidazoleglycerol-phosphate dehydratase family.

It is found in the cytoplasm. It carries out the reaction D-erythro-1-(imidazol-4-yl)glycerol 3-phosphate = 3-(imidazol-4-yl)-2-oxopropyl phosphate + H2O. Its pathway is amino-acid biosynthesis; L-histidine biosynthesis; L-histidine from 5-phospho-alpha-D-ribose 1-diphosphate: step 6/9. The polypeptide is Imidazoleglycerol-phosphate dehydratase (Marinomonas sp. (strain MWYL1)).